Consider the following 104-residue polypeptide: DNA-directed RNA polymerase subunit Rpo13 (104 aa).

Disordered stretches follow at residues 1–34 (MVSG…EEFP) and 76–104 (EKRD…SVEG). Over residues 7-31 (TEEEKEGTNDEEVSEEREVEETSEE) the composition is skewed to acidic residues. Residue Glu32 coordinates DNA. A compositionally biased stretch (basic residues) spans 80–104 (SRRKAKKAASKKVKKTKKKEKSVEG). Residues 81-104 (RRKAKKAASKKVKKTKKKEKSVEG) are required to bind DNA.

It belongs to the archaeal Rpo13 RNA polymerase subunit family. As to quaternary structure, part of the 13-subunit RNA polymerase complex. Rpo1N and Rpo5 form a cleft which docks Rpo13. Forms predominantly dimers in solution, although monomers and trimers can also be seen. Found associated with RNAP but also as a homodimer pool in the cytoplasm in vivo.

The protein localises to the cytoplasm. The enzyme catalyses RNA(n) + a ribonucleoside 5'-triphosphate = RNA(n+1) + diphosphate. DNA-dependent RNA polymerase (RNAP) catalyzes the transcription of DNA into RNA using the four ribonucleoside triphosphates as substrates. A molten-globule protein, it binds dsDNA in the RNAP, in vitro binds dsDNA but not ssDNA. Its position in RNAP implies it functions in both transcription initiation and elongation. The protein is DNA-directed RNA polymerase subunit Rpo13 of Saccharolobus shibatae (strain ATCC 51178 / DSM 5389 / JCM 8931 / NBRC 15437 / B12) (Sulfolobus shibatae).